Consider the following 1303-residue polypeptide: Endoplasmic reticulum transmembrane helix translocase spfA (1303 aa).

Transmembrane regions (helical) follow at residues 25–45 (LHAY…VYLS) and 57–77 (EWTF…WLMT). Residues 158–191 (KPPVKVFQQAQGLTSKEEIDRIQHHYGDNTFDIP) are A-domain; part 1. Helical transmembrane passes span 201–221 (EHAV…WMLD) and 223–243 (YWYY…TVVW). An A-domain; part 2 region spans residues 256-408 (NIKPYDVWVY…LVRTMIYSTE (153 aa)). A glycan (N-linked (GlcNAc...) asparagine) is linked at asparagine 287. The chain crosses the membrane as a helical span at residues 415–435 (VEALLFILFLLIFAIAAAWYV). A glycan (N-linked (GlcNAc...) asparagine) is linked at asparagine 474. The segment at 484–513 (AIFCTEPFRIPFAGRVDVACFDKTGTLTGE) is P-domain; part 1. Residue aspartate 505 is the 4-aspartylphosphate intermediate of the active site. 2 residues coordinate Mg(2+): aspartate 505 and threonine 507. Position 505 to 507 (505 to 507 (DKT)) interacts with ATP. Residues 515 to 721 (LVVDGIAGLT…FAGFLVLQCP (207 aa)) form an N-domain region. N-linked (GlcNAc...) asparagine glycosylation is present at asparagine 589. The ATP site is built by phenylalanine 616 and arginine 678. Residues 724–883 (EDAIKAVRML…HVGVALLNGS (160 aa)) are P-domain; part 2. N-linked (GlcNAc...) asparagine glycosylation is present at asparagine 734. Residues aspartate 746 and 862–866 (DGTND) contribute to the ATP site. Residue aspartate 862 coordinates Mg(2+). Residues 884–1019 (PEDLAKIAEH…ELDDSEPPTI (136 aa)) form an arm-like region. Residue asparagine 958 is glycosylated (N-linked (GlcNAc...) asparagine). The tract at residues 1020–1035 (KLGDASVAAPFTSKLA) is P-domain; part 3. Transmembrane regions (helical) follow at residues 1060–1080 (ILAL…LDGI), 1082–1102 (FGDG…LSIS), 1122–1142 (VYII…LIYL), 1201–1221 (AMYW…TEFI), and 1239–1259 (VTLT…ENVL). A disordered region spans residues 1277 to 1303 (DQLQREMERKKQEELETQAEKERQRKV).

It belongs to the cation transport ATPase (P-type) (TC 3.A.3) family. Type V subfamily. The cofactor is Mg(2+).

It localises to the endoplasmic reticulum membrane. The catalysed reaction is [protein]-with a C-terminal TM segment(out) + ATP + H2O = [protein]-with a C-terminal TM segment(in) + ADP + phosphate + H(+). The ATPase activity is stimulated by phosphatidylinositol 4-phosphate (PI4P). In terms of biological role, endoplasmic reticulum (ER) translocase required to remove mitochondrial transmembrane proteins mistargeted to the endoplasmic reticulum. Acts as a dislocase that mediates the ATP-dependent extraction of mislocalized mitochondrial transmembrane proteins from the endoplasmic reticulum membrane. Works in concert with the ER Ca(2+) pump srcA to support ER homeostasis. With srcA, also supports redox homeostasis and virulence. This chain is Endoplasmic reticulum transmembrane helix translocase spfA, found in Aspergillus fumigatus (strain ATCC MYA-4609 / CBS 101355 / FGSC A1100 / Af293) (Neosartorya fumigata).